Consider the following 623-residue polypeptide: DNA mismatch repair protein MutL (623 aa).

The span at 353–368 shows a compositional bias: polar residues; sequence AQQSAPRPANSYSPAS. A disordered region spans residues 353–389; it reads AQQSAPRPANSYSPASWRTAPPAPRSEWSPQTAHPAH.

This sequence belongs to the DNA mismatch repair MutL/HexB family.

Functionally, this protein is involved in the repair of mismatches in DNA. It is required for dam-dependent methyl-directed DNA mismatch repair. May act as a 'molecular matchmaker', a protein that promotes the formation of a stable complex between two or more DNA-binding proteins in an ATP-dependent manner without itself being part of a final effector complex. The sequence is that of DNA mismatch repair protein MutL from Brucella melitensis biotype 1 (strain ATCC 23456 / CCUG 17765 / NCTC 10094 / 16M).